A 317-amino-acid polypeptide reads, in one-letter code: Acetyl-coenzyme A carboxylase carboxyl transferase subunit alpha (317 aa).

Residues 40–293 form the CoA carboxyltransferase C-terminal domain; it reads LEKRSADALK…GDIIAASLRS (254 aa).

The protein belongs to the AccA family. As to quaternary structure, acetyl-CoA carboxylase is a heterohexamer composed of biotin carboxyl carrier protein (AccB), biotin carboxylase (AccC) and two subunits each of ACCase subunit alpha (AccA) and ACCase subunit beta (AccD).

It localises to the cytoplasm. The catalysed reaction is N(6)-carboxybiotinyl-L-lysyl-[protein] + acetyl-CoA = N(6)-biotinyl-L-lysyl-[protein] + malonyl-CoA. Its pathway is lipid metabolism; malonyl-CoA biosynthesis; malonyl-CoA from acetyl-CoA: step 1/1. Component of the acetyl coenzyme A carboxylase (ACC) complex. First, biotin carboxylase catalyzes the carboxylation of biotin on its carrier protein (BCCP) and then the CO(2) group is transferred by the carboxyltransferase to acetyl-CoA to form malonyl-CoA. The sequence is that of Acetyl-coenzyme A carboxylase carboxyl transferase subunit alpha from Brucella canis (strain ATCC 23365 / NCTC 10854 / RM-666).